We begin with the raw amino-acid sequence, 233 residues long: Ion-translocating oxidoreductase complex subunit E (233 aa).

A run of 5 helical transmembrane segments spans residues 22–42 (LLGL…LGLG), 69–89 (IPIY…LINA), 93–113 (GLYQ…IVVG), 128–148 (ALDG…LGSI), and 182–202 (PMLL…LLAA).

This sequence belongs to the NqrDE/RnfAE family. In terms of assembly, the complex is composed of six subunits: RnfA, RnfB, RnfC, RnfD, RnfE and RnfG.

Its subcellular location is the cell inner membrane. Its function is as follows. Part of a membrane-bound complex that couples electron transfer with translocation of ions across the membrane. In Erwinia tasmaniensis (strain DSM 17950 / CFBP 7177 / CIP 109463 / NCPPB 4357 / Et1/99), this protein is Ion-translocating oxidoreductase complex subunit E.